The primary structure comprises 180 residues: Bifunctional protein PyrR (180 aa).

The PRPP-binding signature appears at 101-113; that stretch reads VILVDDVLYTGRT.

It belongs to the purine/pyrimidine phosphoribosyltransferase family. PyrR subfamily. Homodimer and homohexamer; in equilibrium.

The enzyme catalyses UMP + diphosphate = 5-phospho-alpha-D-ribose 1-diphosphate + uracil. Its function is as follows. Regulates transcriptional attenuation of the pyrimidine nucleotide (pyr) operon by binding in a uridine-dependent manner to specific sites on pyr mRNA. This disrupts an antiterminator hairpin in the RNA and favors formation of a downstream transcription terminator, leading to a reduced expression of downstream genes. In terms of biological role, also displays a weak uracil phosphoribosyltransferase activity which is not physiologically significant. The protein is Bifunctional protein PyrR of Bacillus mycoides (strain KBAB4) (Bacillus weihenstephanensis).